The chain runs to 263 residues: Acyl-[acyl-carrier-protein]--UDP-N-acetylglucosamine O-acyltransferase (263 aa).

Belongs to the transferase hexapeptide repeat family. LpxA subfamily. Homotrimer.

Its subcellular location is the cytoplasm. The enzyme catalyses a (3R)-hydroxyacyl-[ACP] + UDP-N-acetyl-alpha-D-glucosamine = a UDP-3-O-[(3R)-3-hydroxyacyl]-N-acetyl-alpha-D-glucosamine + holo-[ACP]. Its pathway is glycolipid biosynthesis; lipid IV(A) biosynthesis; lipid IV(A) from (3R)-3-hydroxytetradecanoyl-[acyl-carrier-protein] and UDP-N-acetyl-alpha-D-glucosamine: step 1/6. Functionally, involved in the biosynthesis of lipid A, a phosphorylated glycolipid that anchors the lipopolysaccharide to the outer membrane of the cell. The protein is Acyl-[acyl-carrier-protein]--UDP-N-acetylglucosamine O-acyltransferase of Campylobacter jejuni subsp. jejuni serotype O:6 (strain 81116 / NCTC 11828).